The following is a 208-amino-acid chain: Small ribosomal subunit protein uS4 (208 aa).

In terms of domain architecture, S4 RNA-binding spans 98-161 (RRLDNVVYRL…KASPRIKELV (64 aa)).

This sequence belongs to the universal ribosomal protein uS4 family. Part of the 30S ribosomal subunit. Contacts protein S5. The interaction surface between S4 and S5 is involved in control of translational fidelity.

In terms of biological role, one of the primary rRNA binding proteins, it binds directly to 16S rRNA where it nucleates assembly of the body of the 30S subunit. Functionally, with S5 and S12 plays an important role in translational accuracy. In Desulforamulus reducens (strain ATCC BAA-1160 / DSM 100696 / MI-1) (Desulfotomaculum reducens), this protein is Small ribosomal subunit protein uS4.